Reading from the N-terminus, the 389-residue chain is Chalcone synthase 2 (389 aa).

The active site involves C164.

Belongs to the thiolase-like superfamily. Chalcone/stilbene synthases family.

It catalyses the reaction (E)-4-coumaroyl-CoA + 3 malonyl-CoA + 3 H(+) = 2',4,4',6'-tetrahydroxychalcone + 3 CO2 + 4 CoA. It functions in the pathway secondary metabolite biosynthesis; flavonoid biosynthesis. Functionally, the primary product of this enzyme is 4,2',4',6'-tetrahydroxychalcone (also termed naringenin-chalcone or chalcone) which can under specific conditions spontaneously isomerize into naringenin. This Pisum sativum (Garden pea) protein is Chalcone synthase 2 (CHS2).